The primary structure comprises 130 residues: Small ribosomal subunit protein uS11 (130 aa).

The protein belongs to the universal ribosomal protein uS11 family. Part of the 30S ribosomal subunit. Interacts with proteins S7 and S18. Binds to IF-3.

In terms of biological role, located on the platform of the 30S subunit, it bridges several disparate RNA helices of the 16S rRNA. Forms part of the Shine-Dalgarno cleft in the 70S ribosome. This Dehalococcoides mccartyi (strain ATCC BAA-2100 / JCM 16839 / KCTC 5957 / BAV1) protein is Small ribosomal subunit protein uS11.